Consider the following 602-residue polypeptide: uncharacterized protein (602 aa).

Residues asparagine 305, asparagine 497, and asparagine 577 are each glycosylated (N-linked (GlcNAc...) asparagine).

N-glycosylated.

It localises to the vacuole. This is an uncharacterized protein from Saccharomyces cerevisiae (strain ATCC 204508 / S288c) (Baker's yeast).